The primary structure comprises 314 residues: Ribosomal protein L11 methyltransferase (314 aa).

Positions 161, 182, 204, and 248 each coordinate S-adenosyl-L-methionine.

The protein belongs to the methyltransferase superfamily. PrmA family.

The protein localises to the cytoplasm. The enzyme catalyses L-lysyl-[protein] + 3 S-adenosyl-L-methionine = N(6),N(6),N(6)-trimethyl-L-lysyl-[protein] + 3 S-adenosyl-L-homocysteine + 3 H(+). Methylates ribosomal protein L11. The sequence is that of Ribosomal protein L11 methyltransferase from Listeria monocytogenes serotype 4a (strain HCC23).